A 67-amino-acid polypeptide reads, in one-letter code: DNA-directed RNA polymerase subunit omega (67 aa).

Belongs to the RNA polymerase subunit omega family. As to quaternary structure, the RNAP catalytic core consists of 2 alpha, 1 beta, 1 beta' and 1 omega subunit. When a sigma factor is associated with the core the holoenzyme is formed, which can initiate transcription.

The catalysed reaction is RNA(n) + a ribonucleoside 5'-triphosphate = RNA(n+1) + diphosphate. In terms of biological role, promotes RNA polymerase assembly. Latches the N- and C-terminal regions of the beta' subunit thereby facilitating its interaction with the beta and alpha subunits. This chain is DNA-directed RNA polymerase subunit omega, found in Burkholderia ambifaria (strain MC40-6).